A 184-amino-acid polypeptide reads, in one-letter code: ATP-dependent protease subunit HslV (184 aa).

Thr12 is a catalytic residue. The Na(+) site is built by Ala166, Cys169, and Thr172.

This sequence belongs to the peptidase T1B family. HslV subfamily. As to quaternary structure, a double ring-shaped homohexamer of HslV is capped on each side by a ring-shaped HslU homohexamer. The assembly of the HslU/HslV complex is dependent on binding of ATP.

Its subcellular location is the cytoplasm. The enzyme catalyses ATP-dependent cleavage of peptide bonds with broad specificity.. With respect to regulation, allosterically activated by HslU binding. Functionally, protease subunit of a proteasome-like degradation complex believed to be a general protein degrading machinery. In Brucella canis (strain ATCC 23365 / NCTC 10854 / RM-666), this protein is ATP-dependent protease subunit HslV.